The primary structure comprises 581 residues: Estrogen receptor (581 aa).

Residues 1–144 (MYPEDSRVSG…GFEMAKEMRF (144 aa)) form a modulating region. 2 disordered regions span residues 45–66 (APLDAHGPPSDGSLQSLGSGPN) and 99–123 (RSSVPSSQHSVSREDQCGTSDDSYS). Positions 56–66 (GSLQSLGSGPN) are enriched in polar residues. The segment at residues 142–217 (MRFCAVCSDY…VGMMKGGVRK (76 aa)) is a DNA-binding region (nuclear receptor). 2 NR C4-type zinc fingers span residues 145-165 (CAVCSDYASGYHYGVWSCEGC) and 181-200 (CPATNQCTIDRNRRKSCQAC). The hinge stretch occupies residues 211-272 (MKGGVRKDRG…GGGKSSVISM (62 aa)). The span at 216-246 (RKDRGRVLRRDKRRTGTSDRDKASKGLEHRT) shows a compositional bias: basic and acidic residues. Positions 216 to 269 (RKDRGRVLRRDKRRTGTSDRDKASKGLEHRTAPPQDRRKHISSSAGGGGGKSSV) are disordered. The 237-residue stretch at 273–509 (PPDQVLLLLR…DLLLEMLDAH (237 aa)) folds into the NR LBD domain. A compositionally biased stretch (basic and acidic residues) spans 514–528 (PDRPAETWSQADREP). Residues 514 to 581 (PDRPAETWSQ…VHPHPMKPTE (68 aa)) are disordered. Residues 572 to 581 (VHPHPMKPTE) show a composition bias toward basic residues.

It belongs to the nuclear hormone receptor family. NR3 subfamily. As to quaternary structure, binds DNA as a homodimer. Can form a heterodimer with ER-beta.

Its subcellular location is the nucleus. Its function is as follows. The steroid hormones and their receptors are involved in the regulation of eukaryotic gene expression and affect cellular proliferation and differentiation in target tissues. This chain is Estrogen receptor (esr1), found in Sparus aurata (Gilthead sea bream).